Reading from the N-terminus, the 132-residue chain is T-cell receptor alpha chain V region 2B4 (132 aa).

The N-terminal stretch at 1–20 (MKSLSVSLVVLWLLLNWVNS) is a signal peptide. The interval 21–113 (QQNVQQSPES…SALYLCAVTL (93 aa)) is v segment. Asparagine 42 carries an N-linked (GlcNAc...) asparagine glycan. Residues 114-117 (YGGS) form a d segment region. Positions 118–132 (GNKLIFGTGTLLSVK) are j segment.

This is T-cell receptor alpha chain V region 2B4 from Mus musculus (Mouse).